Consider the following 329-residue polypeptide: 4-hydroxythreonine-4-phosphate dehydrogenase (329 aa).

Substrate contacts are provided by His136 and Thr137. 3 residues coordinate a divalent metal cation: His166, His211, and His266. Substrate is bound by residues Lys274, Asn283, and Arg292.

The protein belongs to the PdxA family. As to quaternary structure, homodimer. Zn(2+) is required as a cofactor. Mg(2+) serves as cofactor. The cofactor is Co(2+).

It is found in the cytoplasm. It carries out the reaction 4-(phosphooxy)-L-threonine + NAD(+) = 3-amino-2-oxopropyl phosphate + CO2 + NADH. It participates in cofactor biosynthesis; pyridoxine 5'-phosphate biosynthesis; pyridoxine 5'-phosphate from D-erythrose 4-phosphate: step 4/5. In terms of biological role, catalyzes the NAD(P)-dependent oxidation of 4-(phosphooxy)-L-threonine (HTP) into 2-amino-3-oxo-4-(phosphooxy)butyric acid which spontaneously decarboxylates to form 3-amino-2-oxopropyl phosphate (AHAP). The sequence is that of 4-hydroxythreonine-4-phosphate dehydrogenase from Shigella boydii serotype 4 (strain Sb227).